Reading from the N-terminus, the 117-residue chain is Transcription elongation factor SPT4-B (117 aa).

Positions Met1–Leu40 are interaction with SUPT5H. The segment at Cys16–Cys36 adopts a C4-type zinc-finger fold.

The protein belongs to the SPT4 family. Interacts with SUPT5H to form DSIF. DSIF interacts with the positive transcription elongation factor b complex (P-TEFb complex), which is composed of CDK9 and cyclin-T (CCNT1 or CCNT2). DSIF interacts with RNA polymerase II, and this interaction is reduced by phosphorylation of the C-terminal domain (CTD) of POLR2A by P-TEFb. DSIF also interacts with the NELF complex, which is composed of WHSC2/NELFA, COBRA1/NELFB, TH1L/NELFD and RDBP/NELFE, and this interaction occurs following prior binding of DSIF to RNA polymerase II. DSIF also interacts with HRMT1L2/PRMT1, HTATSF1/TATSF1, RNGTT/CAP1A, SKB1/PRMT5, SUPT6H, and can interact with PIN1. Post-translationally, ubiquitinated by Ubr5 when not assembled in the DSIF complex, leading to its degradation: Ubr5 recognizes and binds a degron that is not accessible when Supt4h1b is part of the DSIF complex. Expressed in brain, heart and liver.

It localises to the nucleus. In terms of biological role, component of the DRB sensitivity-inducing factor complex (DSIF complex), which regulates mRNA processing and transcription elongation by RNA polymerase II. DSIF positively regulates mRNA capping by stimulating the mRNA guanylyltransferase activity of RNGTT/CAP1A. DSIF also acts cooperatively with the negative elongation factor complex (NELF complex) to enhance transcriptional pausing at sites proximal to the promoter. Transcriptional pausing may facilitate the assembly of an elongation competent RNA polymerase II complex. DSIF and NELF promote pausing by inhibition of the transcription elongation factor TFIIS/S-II. TFIIS/S-II binds to RNA polymerase II at transcription pause sites and stimulates the weak intrinsic nuclease activity of the enzyme. Cleavage of blocked transcripts by RNA polymerase II promotes the resumption of transcription from the new 3' terminus and may allow repeated attempts at transcription through natural pause sites. The chain is Transcription elongation factor SPT4-B (Supt4h1b) from Mus musculus (Mouse).